The chain runs to 1296 residues: Histone-lysine N-methyltransferase EHMT1 (1296 aa).

2 disordered regions span residues 1–111 and 170–200; these read MAAA…NHVT and PQTP…TDVR. Ala2 carries the post-translational modification N-acetylalanine. Over residues 14 to 31 the composition is skewed to basic and acidic residues; that stretch reads QETKQDCCMKTELLREDT. Residue Lys23 forms a Glycyl lysine isopeptide (Lys-Gly) (interchain with G-Cter in SUMO1); alternate linkage. Lys23 is covalently cross-linked (Glycyl lysine isopeptide (Lys-Gly) (interchain with G-Cter in SUMO2); alternate). A compositionally biased stretch (polar residues) spans 77–89; the sequence is NTRASPQEGTNRV. Residues 97 to 106 are compositionally biased toward basic and acidic residues; the sequence is VSERDTEVGK. Glycyl lysine isopeptide (Lys-Gly) (interchain with G-Cter in SUMO2) cross-links involve residues Lys191, Lys229, Lys232, Lys315, and Lys325. A disordered region spans residues 341 to 470; the sequence is SLEMDSEDED…SSPGSMEQAA (130 aa). The span at 342–360 shows a compositional bias: acidic residues; sequence LEMDSEDEDSDELEDDEDH. Basic and acidic residues predominate over residues 371-391; it reads EDSRTSKESMSETDRAAKMDG. Acidic residues predominate over residues 392–414; sequence DSEEEQESPDTGEDEDGGDESDL. A Glycyl lysine isopeptide (Lys-Gly) (interchain with G-Cter in SUMO2) cross-link involves residue Lys430. Phosphoserine is present on Ser433. Residues 438-450 are compositionally biased toward basic residues; it reads PARKRRRRSRKKP. At Ser481 the chain carries Phosphoserine. Residues Lys559, Lys644, Lys659, and Lys729 each participate in a glycyl lysine isopeptide (Lys-Gly) (interchain with G-Cter in SUMO2) cross-link. Residues 653 to 714 are disordered; sequence LAPGQEKSLA…PTSGLSQGPG (62 aa). ANK repeat units follow at residues 735-764, 770-799, 803-832, 836-866, 870-899, 903-932, 936-965, and 969-1002; these read FHPK…DPNF, SKRS…NIDT, DQRT…QVDP, EGST…DVNC, GGWT…DINI, EENI…DLHA, HGDS…DVTL, and EGET…DKPV. A histone H3K9me binding region spans residues 903 to 905; it reads EEN. A Phosphoserine modification is found at Ser1046. The Pre-SET domain maps to 1058–1121; the sequence is QYCVCVDDCS…NCRNRVVQNG (64 aa). Cys1060, Cys1062, Cys1066, Cys1071, Cys1073, Cys1103, Cys1107, Cys1109, and Cys1113 together coordinate Zn(2+). The 118-residue stretch at 1124–1241 folds into the SET domain; it reads ARLQLYRTQD…AGEQLGFDYG (118 aa). S-adenosyl-L-methionine is bound by residues 1134 to 1136, Tyr1171, and 1198 to 1199; these read MGW and NH. An interaction with histone H3 region spans residues 1160-1179; the sequence is DSEADVREEDSYLFDLDNKD. Zn(2+) is bound at residue Cys1201. The tract at residues 1240-1243 is interaction with histone H3; the sequence is YGER. Cys1254 contacts Zn(2+). An S-adenosyl-L-methionine-binding site is contributed by Arg1255. Zn(2+) is bound by residues Cys1256 and Cys1261. Positions 1271–1296 are disordered; the sequence is RQASAAQEPQENGLPDTSSAAAADPL.

It belongs to the class V-like SAM-binding methyltransferase superfamily. Interacts with WIZ. Part of the E2F6.com-1 complex in G0 phase composed of E2F6, MGA, MAX, TFDP1, CBX3, BAT8, EHMT1, RING1, RNF2, MBLR, L3MBTL2 and YAF2. Interacts with MPHOSPH8. Interacts with CDYL. Interacts with REST only in the presence of CDYL. Part of a complex containing at least CDYL, REST, WIZ, SETB1, EHMT1 and EHMT2. Heterodimer; heterodimerizes with EHMT2. Interacts (via ANK repeats) with RELA (when monomethylated at 'Lys-310'). Interacts with Baz2b. In terms of tissue distribution, ubiquitous.

The protein resides in the nucleus. The protein localises to the chromosome. The catalysed reaction is N(6)-methyl-L-lysyl(9)-[histone H3] + S-adenosyl-L-methionine = N(6),N(6)-dimethyl-L-lysyl(9)-[histone H3] + S-adenosyl-L-homocysteine + H(+). It catalyses the reaction L-lysyl(9)-[histone H3] + S-adenosyl-L-methionine = N(6)-methyl-L-lysyl(9)-[histone H3] + S-adenosyl-L-homocysteine + H(+). Its activity is regulated as follows. Methyltransferase activity is inhibited by BIX-01294. Efficiently inhibited by compound E72, a BIX-01294 derivative in which the diazepane ring and the benzyl are replaced with a 3-dimethylaminopropyl and a 5-aminopentyl group at sites B and C, respectively. Functionally, histone methyltransferase that specifically mono- and dimethylates 'Lys-9' of histone H3 (H3K9me1 and H3K9me2, respectively) in euchromatin. H3K9me represents a specific tag for epigenetic transcriptional repression by recruiting HP1 proteins to methylated histones. Also weakly methylates 'Lys-27' of histone H3 (H3K27me). Also required for DNA methylation, the histone methyltransferase activity is not required for DNA methylation, suggesting that these 2 activities function independently. Probably targeted to histone H3 by different DNA-binding proteins like E2F6, MGA, MAX and/or DP1. During G0 phase, it probably contributes to silencing of MYC- and E2F-responsive genes, suggesting a role in G0/G1 transition in cell cycle. In addition to the histone methyltransferase activity, also methylates non-histone proteins: mediates dimethylation of 'Lys-373' of p53/TP53. Represses the expression of mitochondrial function-related genes, perhaps by occupying their promoter regions, working in concert with probable chromatin reader Baz2b. In Mus musculus (Mouse), this protein is Histone-lysine N-methyltransferase EHMT1 (Ehmt1).